A 698-amino-acid polypeptide reads, in one-letter code: Auxin response factor 22 (698 aa).

Positions 128-230 (FAKTLTQSDA…ELCVGIRRAK (103 aa)) form a DNA-binding region, TF-B3. The span at 549–577 (TSSGSTETLSPGVTGNSSPNGNAHKTGNA) shows a compositional bias: polar residues. The segment at 549–579 (TSSGSTETLSPGVTGNSSPNGNAHKTGNASD) is disordered. The 81-residue stretch at 603-683 (AGHCKVFMES…RRLTIIAGDR (81 aa)) folds into the PB1 domain.

Belongs to the ARF family. In terms of assembly, homodimers and heterodimers. In terms of tissue distribution, expressed in roots, culms, leaves and young panicles.

It is found in the nucleus. In terms of biological role, auxin response factors (ARFs) are transcriptional factors that bind specifically to the DNA sequence 5'-TGTCTC-3' found in the auxin-responsive promoter elements (AuxREs). The sequence is that of Auxin response factor 22 (ARF22) from Oryza sativa subsp. japonica (Rice).